Here is a 171-residue protein sequence, read N- to C-terminus: 3-hydroxydecanoyl-[acyl-carrier-protein] dehydratase (171 aa).

His70 is an active-site residue.

The protein belongs to the thioester dehydratase family. FabA subfamily. In terms of assembly, homodimer.

The protein localises to the cytoplasm. The enzyme catalyses a (3R)-hydroxyacyl-[ACP] = a (2E)-enoyl-[ACP] + H2O. The catalysed reaction is (3R)-hydroxydecanoyl-[ACP] = (2E)-decenoyl-[ACP] + H2O. It carries out the reaction (2E)-decenoyl-[ACP] = (3Z)-decenoyl-[ACP]. The protein operates within lipid metabolism; fatty acid biosynthesis. Its function is as follows. Necessary for the introduction of cis unsaturation into fatty acids. Catalyzes the dehydration of (3R)-3-hydroxydecanoyl-ACP to E-(2)-decenoyl-ACP and then its isomerization to Z-(3)-decenoyl-ACP. Can catalyze the dehydratase reaction for beta-hydroxyacyl-ACPs with saturated chain lengths up to 16:0, being most active on intermediate chain length. This is 3-hydroxydecanoyl-[acyl-carrier-protein] dehydratase from Colwellia psychrerythraea (strain 34H / ATCC BAA-681) (Vibrio psychroerythus).